Reading from the N-terminus, the 152-residue chain is Cell division protein SepF (152 aa).

It belongs to the SepF family. As to quaternary structure, homodimer. Interacts with FtsZ.

It localises to the cytoplasm. In terms of biological role, cell division protein that is part of the divisome complex and is recruited early to the Z-ring. Probably stimulates Z-ring formation, perhaps through the cross-linking of FtsZ protofilaments. Its function overlaps with FtsA. The polypeptide is Cell division protein SepF (Listeria monocytogenes serotype 4b (strain CLIP80459)).